The chain runs to 139 residues: ATP synthase epsilon chain, chloroplastic (139 aa).

The protein belongs to the ATPase epsilon chain family. F-type ATPases have 2 components, CF(1) - the catalytic core - and CF(0) - the membrane proton channel. CF(1) has five subunits: alpha(3), beta(3), gamma(1), delta(1), epsilon(1). CF(0) has three main subunits: a, b and c.

Its subcellular location is the plastid. The protein resides in the chloroplast thylakoid membrane. In terms of biological role, produces ATP from ADP in the presence of a proton gradient across the membrane. The polypeptide is ATP synthase epsilon chain, chloroplastic (Welwitschia mirabilis (Tree tumbo)).